The following is a 121-amino-acid chain: Large ribosomal subunit protein uL22 (121 aa).

It belongs to the universal ribosomal protein uL22 family. Part of the 50S ribosomal subunit.

Functionally, this protein binds specifically to 23S rRNA; its binding is stimulated by other ribosomal proteins, e.g. L4, L17, and L20. It is important during the early stages of 50S assembly. It makes multiple contacts with different domains of the 23S rRNA in the assembled 50S subunit and ribosome. The globular domain of the protein is located near the polypeptide exit tunnel on the outside of the subunit, while an extended beta-hairpin is found that lines the wall of the exit tunnel in the center of the 70S ribosome. This Rickettsia massiliae (strain Mtu5) protein is Large ribosomal subunit protein uL22.